We begin with the raw amino-acid sequence, 185 residues long: Dual specificity protein phosphatase 3 (185 aa).

A Tyrosine-protein phosphatase domain is found at 28 to 179 (QPCNEVTPRI…LCQLNDRLAK (152 aa)). C124 serves as the catalytic Phosphocysteine intermediate.

This sequence belongs to the protein-tyrosine phosphatase family. Non-receptor class dual specificity subfamily. As to quaternary structure, microtubule inner protein component of sperm flagellar doublet microtubules. Interacts with VRK3; this interaction activates DUSP3 phosphatase activity.

It localises to the nucleus. The protein localises to the cytoplasm. The protein resides in the cytoskeleton. It is found in the flagellum axoneme. The catalysed reaction is O-phospho-L-tyrosyl-[protein] + H2O = L-tyrosyl-[protein] + phosphate. The enzyme catalyses O-phospho-L-seryl-[protein] + H2O = L-seryl-[protein] + phosphate. It catalyses the reaction O-phospho-L-threonyl-[protein] + H2O = L-threonyl-[protein] + phosphate. Its function is as follows. Shows activity both for tyrosine-protein phosphate and serine-protein phosphate, but displays a strong preference toward phosphotyrosines. Specifically dephosphorylates and inactivates ERK1 and ERK2. The protein is Dual specificity protein phosphatase 3 (DUSP3) of Homo sapiens (Human).